The following is a 210-amino-acid chain: Protein GET1 (210 aa).

Topologically, residues 1 to 4 (MPSL) are lumenal. The chain crosses the membrane as a helical span at residues 5–24 (LIIVLIIHVVTYLINTIGAN). At 25–110 (TIDSLLWLLY…SFDLAVKSVR (86 aa)) the chain is on the cytoplasmic side. A coiled-coil region spans residues 39-95 (NQTSQTADEQRRLKREVMQLKREMNATSSQDEFAKWAKLRRRHDKTMEEYEAKNKAL). Residues 111–131 (FFSTTGLKLFLQFWFSKTPIF) traverse the membrane as a helical segment. The Lumenal segment spans residues 132 to 155 (ELPRGWIPWQVEWVLSFPRAPLGT). A helical transmembrane segment spans residues 156-172 (VSIQIWGGVCATVVSLA). The Cytoplasmic portion of the chain corresponds to 173–210 (GDAIGVVNVYLTSKAPKQKEPATSGENSARPMAIKKEL). The segment at 189 to 210 (KQKEPATSGENSARPMAIKKEL) is disordered.

Belongs to the WRB/GET1 family. In terms of assembly, interacts with GET3.

The protein localises to the endoplasmic reticulum membrane. In terms of biological role, required for the post-translational delivery of tail-anchored (TA) proteins to the endoplasmic reticulum. Acts as a membrane receptor for soluble GET3, which recognizes and selectively binds the transmembrane domain of TA proteins in the cytosol. This is Protein GET1 from Coccidioides posadasii (strain C735) (Valley fever fungus).